The chain runs to 260 residues: UPF0246 protein Bcenmc03_2247 (260 aa).

Belongs to the UPF0246 family.

The protein is UPF0246 protein Bcenmc03_2247 of Burkholderia orbicola (strain MC0-3).